The following is a 222-amino-acid chain: Probable transaldolase (222 aa).

The Schiff-base intermediate with substrate role is filled by Lys91.

This sequence belongs to the transaldolase family. Type 3B subfamily.

It localises to the cytoplasm. It catalyses the reaction D-sedoheptulose 7-phosphate + D-glyceraldehyde 3-phosphate = D-erythrose 4-phosphate + beta-D-fructose 6-phosphate. The protein operates within carbohydrate degradation; pentose phosphate pathway; D-glyceraldehyde 3-phosphate and beta-D-fructose 6-phosphate from D-ribose 5-phosphate and D-xylulose 5-phosphate (non-oxidative stage): step 2/3. Transaldolase is important for the balance of metabolites in the pentose-phosphate pathway. The chain is Probable transaldolase from Chlorobium limicola (strain DSM 245 / NBRC 103803 / 6330).